Here is a 138-residue protein sequence, read N- to C-terminus: Holo-[acyl-carrier-protein] synthase (138 aa).

Mg(2+) contacts are provided by Asp-8 and Glu-56.

This sequence belongs to the P-Pant transferase superfamily. AcpS family. It depends on Mg(2+) as a cofactor.

The protein resides in the cytoplasm. It carries out the reaction apo-[ACP] + CoA = holo-[ACP] + adenosine 3',5'-bisphosphate + H(+). In terms of biological role, transfers the 4'-phosphopantetheine moiety from coenzyme A to a Ser of acyl-carrier-protein. This Thermoanaerobacter pseudethanolicus (strain ATCC 33223 / 39E) (Clostridium thermohydrosulfuricum) protein is Holo-[acyl-carrier-protein] synthase.